We begin with the raw amino-acid sequence, 99 residues long: UPF0125 protein PM0166 (99 aa).

The protein belongs to the UPF0125 (RnfH) family.

In Pasteurella multocida (strain Pm70), this protein is UPF0125 protein PM0166.